The primary structure comprises 196 residues: ATP-dependent Clp protease proteolytic subunit (196 aa).

The Nucleophile role is filled by serine 101. Histidine 126 is a catalytic residue.

This sequence belongs to the peptidase S14 family. In terms of assembly, component of the chloroplastic Clp protease core complex.

It localises to the plastid. It is found in the chloroplast stroma. It catalyses the reaction Hydrolysis of proteins to small peptides in the presence of ATP and magnesium. alpha-casein is the usual test substrate. In the absence of ATP, only oligopeptides shorter than five residues are hydrolyzed (such as succinyl-Leu-Tyr-|-NHMec, and Leu-Tyr-Leu-|-Tyr-Trp, in which cleavage of the -Tyr-|-Leu- and -Tyr-|-Trp bonds also occurs).. Its function is as follows. Cleaves peptides in various proteins in a process that requires ATP hydrolysis. Has a chymotrypsin-like activity. Plays a major role in the degradation of misfolded proteins. The protein is ATP-dependent Clp protease proteolytic subunit of Helianthus annuus (Common sunflower).